A 1454-amino-acid chain; its full sequence is MDVDEPNPIVISDSEATDEEISIIYEPEFNENYLWAEENVQEASRSQKIVTERLSLDSTAGESCTPSVVTDTQVTTGLRWSLRKRKAIQKMPYSLERIKHRQLLEGYDISSFDSISNQLTLPKNASTVIHSNDILLTKRTGKPLDEQKDVTIDSIKPENSSVQSQRYDSDEEIPKKRHRTFKDLDQDIVFQSGDSTEDEQDLASTNLQNTQNDEVIFRGRVLNVRTGYRGVLPRVAWEKSLQKQQSSKVTKRKTQLLNHKGVAKRKMNRSAHIEDEEQNLLNDLIAPDDELDIEENAPPDIYLGNLPEDREANEKELKELQEYYESKYSEDAQSAGTSGFNLNEEYRNEPVYELEYDGPGSCISHVSYKDQPIIYLNSRHSDSGFSEQYNISAEDNQSVISLDAAEEHNDGIIDKMLVKPKRIKATNDANFLNTKSKRVRRYKYKYRNSCLAPSTKAIKVGKRSAHKSHLAANNPVSFVSKKNHVIDDYFFEELESQSLEQDDSSSLKPQKKRRKKKAPIYSSFSADLESRRKPVFNTVVEVPTNRYAFTKPNVRNRDSINHDMEFEEEDSNQELGPIMVVLDSILLKKPFEPPNFFKIQLSDKSFLLSKLNPADIATSLQKIFRVIIDKGITDTELVHFNESLIAFLVHLDMPELFDLIGEFHREFRSKVNSLRKKAKPIHFFQIAACQLMFLEISRYNKISAAAKFDMDVKLLDHIVSFFKLLSVCYDSVMKNPMQYLYTSYYILSAVVDVIHKKEALWDLFQKHPFSPHISLLLVNIFPTKVCRWQVLRLDSEFQPLSSAFRFINYCIETCNWNVTNSLILSLDRIFKRRRFSDFEEESDLSQNNKIIYPPTNQLTSRLMFNRYLHLLTLCELSSSDTQRVIPMGDISMNDSLSVLKNRLNLLIVLATRFDLNLEKRFQELTRPLYSKEYLNLHTQNTVRTITTLIMQASLSFLEISRIKNHPFSGKFIASLFDKLVLQQPSISGVTENFLKEFTNLVSKMKRKSVSMLKFLYPSLVAMSQENIFESSFFLLLQVYLKSLDVLGPTWVQNYLFQFIKSKAQENERWIECYCQIGKFLVDSGIFTWWTFFTYNGLDAALHFQLAFHSLIIDFCDTDSFELLKKPLYSIASDLLLISKDDAFYHFLSNLLKRAHIIVADLKPVSDENELLRLAYIFSKALKKNAYQDLLAVFLSLAKKHYDEGDISRNFLAKYLEFLNKNCLTELRNNQLFISLRRELGISSDEDEKCAFWDSFNEAGDILSKAAFVETGIVQACCTGNEIDGYLDNLSTLFTSTMLESPFAFFSDLVIAHIFENRPFFDVNIKNFLLSHFIDLFNKVLKMKFEQVSPDEFAELCKVYRALCIECATDDTFNSNSDLIAAKDAFLVSVLRIADGFWEHDKLLQLRMLDSNMNIPNQIPHTTLQSSLSAIVIKIIESNIGKIEASEPFKTFKNT.

The interval 159 to 178 is disordered; that stretch reads NSSVQSQRYDSDEEIPKKRH. The segment at 1201-1454 is required for interaction with MMS1; the sequence is YDEGDISRNF…SEPFKTFKNT (254 aa).

Belongs to the MMS22 family. In terms of assembly, component of a cullin-RING ligase (CRL) composed of 4 subunits: the RING protein HRT1, the cullin RTT101, a linker protein MMS1, and the substrate receptor MMS22. This complex further interacts with RTT107 and CTF4 to form RTT101-MMS1-MMS22-RTT107 and RTT101-MMS1-MMS22-CTF4 complexes respectively. Interacts (via C-ter) with MMS1 (via N-ter). Interacts with RTT107.

The protein localises to the nucleus. Its function is as follows. Substrate targeting component of a cullin-RING-based E3 ubiquitin-protein ligase complex RTT101(MMS1-MMS22). RTT101(MMS1-MMS22) promotes fork progression through damaged DNA or natural pause sites by stabilizing replication proteins like the replication fork-pausing complex (FPC) and leading-strand polymerase at stalled replication forks. RTT101(MMS1-MMS22) ubiquitinates the acetylated histones H3K56ac-H4 at lysine residues H3K121, H3K122 and H3K125. Ubiquitination is required for efficient histone deposition during replication-coupled nucleosome assembly, probably by facilitating the transfer of H3-H4 from ASF1 to other chaperones involved in histone deposition. The sequence is that of E3 ubiquitin-protein ligase substrate receptor MMS22 (MMS22) from Saccharomyces cerevisiae (strain ATCC 204508 / S288c) (Baker's yeast).